The primary structure comprises 56 residues: Large ribosomal subunit protein bL32 (56 aa).

The interval 1–40 (MAVQQNKKSRSKRGMRRSHDSLGTAQLSVDATSGELHRRH) is disordered. The span at 7-16 (KKSRSKRGMR) shows a compositional bias: basic residues. Over residues 21 to 31 (SLGTAQLSVDA) the composition is skewed to polar residues.

Belongs to the bacterial ribosomal protein bL32 family.

The sequence is that of Large ribosomal subunit protein bL32 from Shewanella halifaxensis (strain HAW-EB4).